Reading from the N-terminus, the 573-residue chain is CTP synthase (573 aa).

The segment at 1–281 is amidoligase domain; it reads MGQTRIQART…DAYVVRRLGL (281 aa). Ser23 is a binding site for CTP. Ser23 lines the UTP pocket. Residues 24–29 and Asp81 each bind ATP; that span reads SLGKGL. Asp81 and Glu155 together coordinate Mg(2+). CTP is bound by residues 162–164, 202–207, and Lys238; these read DIE and KTKPTQ. UTP contacts are provided by residues 202–207 and Lys238; that span reads KTKPTQ. In terms of domain architecture, Glutamine amidotransferase type-1 spans 306–554; that stretch reads EVALVGKYVD…IAAALKYKLA (249 aa). Gly369 is a binding site for L-glutamine. Cys396 (nucleophile; for glutamine hydrolysis) is an active-site residue. L-glutamine-binding positions include 397-400, Glu419, and Arg480; that span reads LGLQ. Catalysis depends on residues His527 and Glu529.

It belongs to the CTP synthase family. Homotetramer.

It catalyses the reaction UTP + L-glutamine + ATP + H2O = CTP + L-glutamate + ADP + phosphate + 2 H(+). It carries out the reaction L-glutamine + H2O = L-glutamate + NH4(+). The catalysed reaction is UTP + NH4(+) + ATP = CTP + ADP + phosphate + 2 H(+). Its pathway is pyrimidine metabolism; CTP biosynthesis via de novo pathway; CTP from UDP: step 2/2. Allosterically activated by GTP, when glutamine is the substrate; GTP has no effect on the reaction when ammonia is the substrate. The allosteric effector GTP functions by stabilizing the protein conformation that binds the tetrahedral intermediate(s) formed during glutamine hydrolysis. Inhibited by the product CTP, via allosteric rather than competitive inhibition. Functionally, catalyzes the ATP-dependent amination of UTP to CTP with either L-glutamine or ammonia as the source of nitrogen. Regulates intracellular CTP levels through interactions with the four ribonucleotide triphosphates. The chain is CTP synthase from Nocardia farcinica (strain IFM 10152).